The chain runs to 425 residues: Histone-binding protein RBBP7 (425 aa).

Position 2 is an N-acetylalanine (Ala2). Residue Ser3 is modified to Phosphoserine. Residue Lys4 is modified to N6-acetyllysine; alternate. A Glycyl lysine isopeptide (Lys-Gly) (interchain with G-Cter in SUMO2); alternate cross-link involves residue Lys4. Residue Lys4 forms a Glycyl lysine isopeptide (Lys-Gly) (interchain with G-Cter in ubiquitin); alternate linkage. Thr10 carries the phosphothreonine modification. Residues Glu13 and Ser95 each carry the phosphoserine modification. WD repeat units follow at residues 47–122 (QWLP…KINH), 128–173 (RARY…LRLR), 181–217 (GLSW…KIVD), 228–269 (VVED…HLVD), 275–312 (VNCL…LHTF), 318–369 (EIFQ…LFIH), and 376–403 (ISDF…IWQM). A Glycyl lysine isopeptide (Lys-Gly) (interchain with G-Cter in SUMO2) cross-link involves residue Lys101. Lys119 is subject to N6-acetyllysine. A Glycyl lysine isopeptide (Lys-Gly) (interchain with G-Cter in SUMO2) cross-link involves residue Lys155. Lys159 carries the post-translational modification N6-acetyllysine; alternate. Residue Lys159 forms a Glycyl lysine isopeptide (Lys-Gly) (interchain with G-Cter in SUMO2); alternate linkage. At Ser354 the chain carries Phosphoserine.

This sequence belongs to the WD repeat RBAP46/RBAP48/MSI1 family. Binds directly to helix 1 of the histone fold of histone H4, a region that is not accessible when H4 is in chromatin. Subunit of the type B histone acetyltransferase (HAT) complex, composed of RBBP7 and HAT1. Subunit of the core histone deacetylase (HDAC) complex, which is composed of HDAC1, HDAC2, RBBP4 and RBBP7. The core HDAC complex associates with SIN3A, ARID4B/SAP180, SAP18, SAP30, SAP130, SUDS3/SAP45 and possibly ARID4A/RBP1 and ING1 to form the SIN3 HDAC complex. Component of the nucleosome remodeling and deacetylase (NuRD) repressor complex, composed of core proteins MTA1, MTA2, MTA3, RBBP4, RBBP7, HDAC1, HDAC2, MBD2, MBD3, and peripherally associated proteins CDK2AP1, CDK2AP2, GATAD2A, GATAD2B, CHD3, CHD4 and CHD5. The exact stoichiometry of the NuRD complex is unknown, and some subunits such as MBD2 and MBD3, GATAD2A and GATAD2B, and CHD3, CHD4 and CHD5 define mutually exclusive NuRD complexes. The NuRD complex may interact with MBD3L1. The NuRD complex may interact with MBD3L2. Subunit of the PRC2/EED-EZH2 complex, which is composed of at least EED, EZH2, RBBP4, RBBP7 and SUZ12. The PRC2/EED-EZH2 complex may also associate with HDAC1. Component of the NURF-1 ISWI chromatin remodeling complex (also called the nucleosome-remodeling factor (NURF) complex) at least composed of SMARCA1 (isoform 2), BPTF, RBBP4 and RBBP7. Within the complex interacts with isoform 2 of SMARCA1. Component of the BPFT-SMARCA1 complex at least composed of SMARCA1 (isoform 1), BPFT, RBBP4 and RBBP7; the complex is catalytically inactive and does not remodel chromatin. Within the complex interacts with isoform 1 of SMARCA1. Interacts with BRCA1. Interacts with CDK2AP1. Interacts with CENPA. Interacts with CHD3. Interacts with CHD4. Interacts with CREBBP, and this interaction may be enhanced by the binding of phosphorylated CREB1 to CREBBP. Interacts with HDAC7. Interacts with MTA1. Interacts with PWWP2B. Interacts with RB1 (via viral protein-binding domain). Interacts with SUV39H1.

The protein localises to the nucleus. Core histone-binding subunit that may target chromatin remodeling factors, histone acetyltransferases and histone deacetylases to their histone substrates in a manner that is regulated by nucleosomal DNA. Component of several complexes which regulate chromatin metabolism. These include the type B histone acetyltransferase (HAT) complex, which is required for chromatin assembly following DNA replication; the core histone deacetylase (HDAC) complex, which promotes histone deacetylation and consequent transcriptional repression; the nucleosome remodeling and histone deacetylase complex (the NuRD complex), which promotes transcriptional repression by histone deacetylation and nucleosome remodeling; and the PRC2/EED-EZH2 complex, which promotes repression of homeotic genes during development; and the NURF (nucleosome remodeling factor) complex. This chain is Histone-binding protein RBBP7 (RBBP7), found in Homo sapiens (Human).